The sequence spans 38 residues: Alpha-conotoxin PeIA (38 aa).

Positions 1–21 (FDGRNAAANDKASDLVALTVR) are excised as a propeptide. 2 disulfide bridges follow: Cys-23–Cys-29 and Cys-24–Cys-37. A ser-Xaa-Pro motif, crucial for potent interaction with nAChR region spans residues 25 to 27 (SHP). Cys-37 carries the post-translational modification Cysteine amide.

This sequence belongs to the conotoxin A superfamily. The hydroxylation at position Pro-27 is critical, since an hydroxylation at this position decreases potency of the toxin to inhibit both alpha-3-beta-2 (1300-fold) and alpha-6/alpha-3-beta-2-beta-3 (130-fold) nAChRs. Post-translationally, a non-modified residue at position Pro-34 is critical, since a hydroxylation at this position decreases potency of the toxin to inhibit alpha-3-beta-2 (1-45-fold) and increases potency to inhibit alpha-6/alpha-3-beta-2-beta-3 (1.77-fold) nAChRs. As to expression, expressed by the venom duct.

The protein localises to the secreted. In terms of biological role, alpha-conotoxins act on postsynaptic membranes, they bind to the nicotinic acetylcholine receptors (nAChR) and thus inhibit them. This synthetic peptide potently and reversibly blocks alpha-9-alpha-10/CHRNA9-CHRNA10 nAChR (IC(50)=6.9-54.9 nM), alpha-3-beta-2/CHRNA3-CHRNB2 (IC(50)=9.7-97.5 nM) and alpha-6/alpha-3-beta-2-beta-3 (CHRNA6/CHRNA3-CHRNB2-CHRNB3) (IC(50)=11.1-17.2 nM). It also inhibits alpha-6/alpha-3-beta-4 (CHRNA6/CHRNA3-CHRNB4) nAChR with a higher potency on human (IC(50)=6.75 nM) than on rat receptors (IC(50)=130-147 nM). Also shows a weak ability to inhibit alpha-3-beta-4/CHRNA3-CHRNB4 (IC(50)=480-1500 nM). This synthetic toxin also inhibits N-type calcium channels (Ca2.2/CACNA1B) (IC(50)=1.1 nM) via the activation of the G protein-coupled GABA(B) receptor in DRG neurons. Also exhibits inhibition of D.melanogaster alpha-7/CHRNA7 nAChRs. The polypeptide is Alpha-conotoxin PeIA (Conus pergrandis (Grand cone)).